A 297-amino-acid chain; its full sequence is Acetylglutamate kinase (297 aa).

Residues 73-74 (GG), Arg-95, and Asn-188 contribute to the substrate site.

The protein belongs to the acetylglutamate kinase family. ArgB subfamily.

It is found in the cytoplasm. It catalyses the reaction N-acetyl-L-glutamate + ATP = N-acetyl-L-glutamyl 5-phosphate + ADP. It participates in amino-acid biosynthesis; L-arginine biosynthesis; N(2)-acetyl-L-ornithine from L-glutamate: step 2/4. In terms of biological role, catalyzes the ATP-dependent phosphorylation of N-acetyl-L-glutamate. The protein is Acetylglutamate kinase of Nostoc sp. (strain PCC 7120 / SAG 25.82 / UTEX 2576).